A 335-amino-acid chain; its full sequence is Zinc-type alcohol dehydrogenase-like protein SAS2087 (335 aa).

This sequence belongs to the zinc-containing alcohol dehydrogenase family. Quinone oxidoreductase subfamily.

This chain is Zinc-type alcohol dehydrogenase-like protein SAS2087, found in Staphylococcus aureus (strain MSSA476).